The sequence spans 272 residues: Prohibitin 1 (272 aa).

Positions 177-211 (KEFTEAVEMKQVAQQEAERARFIVEKAEQQKKAAV) form a coiled coil.

In terms of assembly, the mitochondrial prohibitin complex consists of two subunits (PHB1 and PHB2), assembled into a membrane-associated ring-shaped supercomplex of approximately 1 mDa.

The protein resides in the mitochondrion inner membrane. It is found in the nucleus. The protein localises to the cytoplasm. It localises to the cell membrane. In terms of biological role, protein with pleiotropic attributes mediated in a cell-compartment- and tissue-specific manner, which include the plasma membrane-associated cell signaling functions, mitochondrial chaperone, and transcriptional co-regulator of transcription factors in the nucleus. In the mitochondria, together with PHB2, forms large ring complexes (prohibitin complexes) in the inner mitochondrial membrane (IMM) and functions as a chaperone protein that stabilizes mitochondrial respiratory enzymes and maintains mitochondrial integrity in the IMM, which is required for mitochondrial morphogenesis, neuronal survival, and normal lifespan. Its function is as follows. In the nucleus, acts as a transcription coregulator, enhances promoter binding by TP53, a transcription factor it activates, but reduces the promoter binding by E2F1, a transcription factor it represses. Functionally, in the plasma membrane, cooperates with CD86 to mediate CD86-signaling in B lymphocytes that regulates the level of IgG1 produced through the activation of distal signaling intermediates. Upon CD40 engagement, required to activate NF-kappa-B signaling pathway via phospholipase C and protein kinase C activation. The protein is Prohibitin 1 (PHB1) of Gallus gallus (Chicken).